We begin with the raw amino-acid sequence, 177 residues long: Adenine phosphoribosyltransferase (177 aa).

This sequence belongs to the purine/pyrimidine phosphoribosyltransferase family. Homodimer.

The protein resides in the cytoplasm. The catalysed reaction is AMP + diphosphate = 5-phospho-alpha-D-ribose 1-diphosphate + adenine. The protein operates within purine metabolism; AMP biosynthesis via salvage pathway; AMP from adenine: step 1/1. Functionally, catalyzes a salvage reaction resulting in the formation of AMP, that is energically less costly than de novo synthesis. The protein is Adenine phosphoribosyltransferase of Rhodococcus jostii (strain RHA1).